A 277-amino-acid chain; its full sequence is MKHLPQLEGVSVGLEGEAVSLFWGEIKEEERQEIYECAKALVPWRKGPFWVGDFLIDSEWVSAKKYALLEPHFDLCNKDVADIGCNNGYYMFRMWGQKPKSLTGFDPSPLCRTQFDFINHFIQAPIRFELLGVEHLEGYGKLFDVIFCLGVLYHRSDPIQTLKSLYKGLAKGGELLLDTLMIEGEEEVALTPKDRYAKMSNVYFIPTFKALSHWLHRAGFERVEKLEIAKTGLDEQRKTEWINSQSLEDFLDPCSHDRTIEGYPAPRRIYVKAYKGA.

Carboxy-S-adenosyl-L-methionine-binding positions include Lys-46, Trp-60, Lys-65, Gly-84, 106 to 108 (DPS), 133 to 134 (VE), Tyr-153, and Arg-268.

The protein belongs to the class I-like SAM-binding methyltransferase superfamily. CmoB family. As to quaternary structure, homotetramer.

The enzyme catalyses carboxy-S-adenosyl-L-methionine + 5-hydroxyuridine(34) in tRNA = 5-carboxymethoxyuridine(34) in tRNA + S-adenosyl-L-homocysteine + H(+). In terms of biological role, catalyzes carboxymethyl transfer from carboxy-S-adenosyl-L-methionine (Cx-SAM) to 5-hydroxyuridine (ho5U) to form 5-carboxymethoxyuridine (cmo5U) at position 34 in tRNAs. This is tRNA U34 carboxymethyltransferase from Wolinella succinogenes (strain ATCC 29543 / DSM 1740 / CCUG 13145 / JCM 31913 / LMG 7466 / NCTC 11488 / FDC 602W) (Vibrio succinogenes).